A 157-amino-acid polypeptide reads, in one-letter code: Endoribonuclease YbeY (157 aa).

3 residues coordinate Zn(2+): H121, H125, and H131.

The protein belongs to the endoribonuclease YbeY family. The cofactor is Zn(2+).

The protein resides in the cytoplasm. Its function is as follows. Single strand-specific metallo-endoribonuclease involved in late-stage 70S ribosome quality control and in maturation of the 3' terminus of the 16S rRNA. The chain is Endoribonuclease YbeY from Salinispora tropica (strain ATCC BAA-916 / DSM 44818 / JCM 13857 / NBRC 105044 / CNB-440).